The sequence spans 227 residues: UPF0173 metal-dependent hydrolase BT9727_4343 (227 aa).

This sequence belongs to the UPF0173 family.

This Bacillus thuringiensis subsp. konkukian (strain 97-27) protein is UPF0173 metal-dependent hydrolase BT9727_4343.